Reading from the N-terminus, the 79-residue chain is Dolichyl-diphosphooligosaccharide--protein glycosyltransferase subunit TMEM258 (79 aa).

2 helical membrane passes run 19 to 39 and 55 to 75; these read PLLT…FTMI and FIAA…LLWV.

The protein belongs to the OST5 family. Component of the oligosaccharyltransferase (OST) complex.

It localises to the membrane. Its pathway is protein modification; protein glycosylation. Subunit of the oligosaccharyl transferase (OST) complex that catalyzes the initial transfer of a defined glycan (Glc(3)Man(9)GlcNAc(2) in eukaryotes) from the lipid carrier dolichol-pyrophosphate to an asparagine residue within an Asn-X-Ser/Thr consensus motif in nascent polypeptide chains, the first step in protein N-glycosylation. N-glycosylation occurs cotranslationally and the complex associates with the Sec61 complex at the channel-forming translocon complex that mediates protein translocation across the endoplasmic reticulum (ER). All subunits are required for a maximal enzyme activity. The polypeptide is Dolichyl-diphosphooligosaccharide--protein glycosyltransferase subunit TMEM258 (Caenorhabditis elegans).